Here is a 354-residue protein sequence, read N- to C-terminus: GTPase Obg (354 aa).

An Obg domain is found at 1–159 (MKFLDQCKIY…LWVWLRLKLI (159 aa)). The OBG-type G domain maps to 160–328 (ADVGLVGLPN…LLRAAFTQVR (169 aa)). GTP-binding positions include 166-173 (GLPNAGKS), 191-195 (FTTLT), 213-216 (DIPG), 280-283 (NKVD), and 309-311 (SGV). Mg(2+) contacts are provided by S173 and T193. The disordered stretch occupies residues 333–354 (ETPAEAAIDEAPEEETPGGWQP). Residues 339 to 348 (AIDEAPEEET) show a composition bias toward acidic residues.

This sequence belongs to the TRAFAC class OBG-HflX-like GTPase superfamily. OBG GTPase family. As to quaternary structure, monomer. It depends on Mg(2+) as a cofactor.

It is found in the cytoplasm. An essential GTPase which binds GTP, GDP and possibly (p)ppGpp with moderate affinity, with high nucleotide exchange rates and a fairly low GTP hydrolysis rate. Plays a role in control of the cell cycle, stress response, ribosome biogenesis and in those bacteria that undergo differentiation, in morphogenesis control. The protein is GTPase Obg of Caulobacter sp. (strain K31).